The chain runs to 436 residues: Voltage-gated purine nucleotide uniporter SLC17A9 (436 aa).

10 helical membrane passes run 64-84, 92-112, 118-138, 158-178, 181-201, 239-259, 276-296, 316-336, 369-389, and 402-422; these read IVLS…GHLG, VILL…LLAH, LAFM…YFPA, IVGA…SLLL, YGWQ…VWYV, PAVW…FILL, WIFN…SGFL, GMGL…SSFC, GFLF…GVCL, and CLFN…LVFG.

The protein belongs to the major facilitator superfamily. Sodium/anion cotransporter family. In terms of tissue distribution, widely expressed, but more predominantly in adrenal gland, brain and thyroid.

The protein localises to the cytoplasmic vesicle. Its subcellular location is the secretory vesicle. It localises to the chromaffin granule membrane. It is found in the secretory vesicle membrane. The protein resides in the lysosome membrane. The enzyme catalyses ATP(in) = ATP(out). The catalysed reaction is ADP(in) = ADP(out). It carries out the reaction GTP(in) = GTP(out). Activity is chloride-dependent. Inhibited by AMP-PNP, gammaS-ATP, diadenosine triphosphate, 4,4'- diisothiocyanatostilbene-2,2'-disulfonate (DIDS) and Evans blue. Its function is as follows. Voltage-gated ATP nucleotide uniporter that can also transport the purine nucleotides ADP and GTP. Uses the membrane potential as the driving force to control ATP accumulation in lysosomes and secretory vesicles. By controlling ATP storage in lysosomes, regulates ATP-dependent proteins of these organelles. Also indirectly regulates the exocytosis of ATP through its import into lysosomes in astrocytes and secretory vesicles such as adrenal chromaffin granules, mucin granules and synaptic vesicles. The chain is Voltage-gated purine nucleotide uniporter SLC17A9 from Homo sapiens (Human).